A 353-amino-acid polypeptide reads, in one-letter code: 3'(2'),5'-bisphosphate nucleotidase 1 (353 aa).

Asp46 serves as the catalytic Proton acceptor. Positions 71, 134, 136, and 137 each coordinate Mg(2+). The Proton acceptor role is filled by Thr139. Adenosine 3',5'-bisphosphate-binding residues include Thr139, His235, Ser259, Lys262, Arg276, and Asp288. 5 residues coordinate AMP: His235, Ser259, Lys262, Arg276, and Asp288. Residue Asp288 participates in Mg(2+) binding.

This sequence belongs to the inositol monophosphatase superfamily. Mg(2+) serves as cofactor. Expressed in roots, leaves, stems, flowers and siliques.

The catalysed reaction is 3'-phosphoadenylyl sulfate + H2O = adenosine 5'-phosphosulfate + phosphate. It carries out the reaction adenosine 3',5'-bisphosphate + H2O = AMP + phosphate. It catalyses the reaction adenosine 2',5'-bisphosphate + H2O = AMP + phosphate. The enzyme catalyses 1D-myo-inositol 1,4-bisphosphate + H2O = 1D-myo-inositol 4-phosphate + phosphate. The catalysed reaction is 1D-myo-inositol 1,3,4-trisphosphate + H2O = 1D-myo-inositol 3,4-bisphosphate + phosphate. The protein operates within signal transduction; phosphatidylinositol signaling pathway. Inhibited non-competitively by Li(+) (IC(50)=0.20 mM) and Na(+) (IC(50)=200 mM). Its function is as follows. Phosphatase that converts adenosine 3'-phosphate 5'-phosphosulfate (PAPS) to adenosine 5'-phosphosulfate (APS) and 3'(2')-phosphoadenosine 5'-phosphate (PAP) to AMP. May regulate the flux of sulfur in the sulfur-activation pathway by converting PAPS to APS. May play a role in the biosynthesis of sulfate conjugates and RNA processing. Is also able to hydrolyze inositol 1,4-bisphosphate and inositol 1,3,4-trisphosphate. Could be considered as a negative regulator of abscisic acid (ABA)- and stress-responsive genes, through modulating the inositol 1,4,5-trisphosphate (IP3) turnover. Is also involved in salt tolerance. Acts as a suppressor of virus- and transgene-induced silencing. The chain is 3'(2'),5'-bisphosphate nucleotidase 1 from Arabidopsis thaliana (Mouse-ear cress).